The following is a 295-amino-acid chain: 4-diphosphocytidyl-2-C-methyl-D-erythritol kinase (295 aa).

The active site involves Lys-22. 106–116 lines the ATP pocket; it reads PAGGGFGGGSS. Residue Asp-148 is part of the active site.

It belongs to the GHMP kinase family. IspE subfamily.

The catalysed reaction is 4-CDP-2-C-methyl-D-erythritol + ATP = 4-CDP-2-C-methyl-D-erythritol 2-phosphate + ADP + H(+). It functions in the pathway isoprenoid biosynthesis; isopentenyl diphosphate biosynthesis via DXP pathway; isopentenyl diphosphate from 1-deoxy-D-xylulose 5-phosphate: step 3/6. Catalyzes the phosphorylation of the position 2 hydroxy group of 4-diphosphocytidyl-2C-methyl-D-erythritol. In Xanthomonas axonopodis pv. citri (strain 306), this protein is 4-diphosphocytidyl-2-C-methyl-D-erythritol kinase.